Consider the following 501-residue polypeptide: Fumarate reductase 2 (501 aa).

The transit peptide at 1-32 (MIRSVRRVFIYVSIFVLIIVLKRTLSGTDQTS) directs the protein to the mitochondrion. FAD is bound at residue 37 to 51 (VVVIGSGLAGLTTSN). Catalysis depends on residues His-281 and Arg-304.

This sequence belongs to the FAD-dependent oxidoreductase 2 family. FRD/SDH subfamily. FAD serves as cofactor.

It is found in the mitochondrion. It carries out the reaction succinate + NAD(+) = fumarate + NADH + H(+). In terms of biological role, irreversibly catalyzes the reduction of fumarate to succinate. Together with the second isozyme of soluble fumarate reductase (FRD1), essential for anaerobic growth. Involved in maintaining redox balance during oxygen deficiency conditions. Reduction of fumarate is the main source of succinate during fermentation, and under anaerobic conditions, the formation of succinate is strictly required for the reoxidation of FADH(2). This is Fumarate reductase 2 (OSM1) from Saccharomyces cerevisiae (strain ATCC 204508 / S288c) (Baker's yeast).